The chain runs to 704 residues: Elongation factor G (704 aa).

Positions 8 to 291 (DRVRNIGIMA…AVIDYLASPV (284 aa)) constitute a tr-type G domain. Residues 17 to 24 (AHIDAGKT), 90 to 94 (DTPGH), and 144 to 147 (NKMD) contribute to the GTP site.

It belongs to the TRAFAC class translation factor GTPase superfamily. Classic translation factor GTPase family. EF-G/EF-2 subfamily.

The protein resides in the cytoplasm. In terms of biological role, catalyzes the GTP-dependent ribosomal translocation step during translation elongation. During this step, the ribosome changes from the pre-translocational (PRE) to the post-translocational (POST) state as the newly formed A-site-bound peptidyl-tRNA and P-site-bound deacylated tRNA move to the P and E sites, respectively. Catalyzes the coordinated movement of the two tRNA molecules, the mRNA and conformational changes in the ribosome. This is Elongation factor G from Chlorobaculum tepidum (strain ATCC 49652 / DSM 12025 / NBRC 103806 / TLS) (Chlorobium tepidum).